Consider the following 751-residue polypeptide: Trehalose phosphorylase (751 aa).

Residues Met1–Ser26 constitute a propeptide that is removed on maturation. The segment at Met1–Gln28 is disordered.

It belongs to the glycosyltransferase group 1 family. Glycosyltransferase 4 subfamily. Homodimer. As to expression, expressed in mycelia, stipes and pilei.

It catalyses the reaction alpha,alpha-trehalose + phosphate = alpha-D-glucose + alpha-D-glucose 1-phosphate. Reversibly catalyzes the synthesis and degradation of trehalose from glucose and alpha-D-glucose 1-phosphate. The equilibrium lies in the direction of trehalose synthesis. The chain is Trehalose phosphorylase from Pleurotus sajor-caju (Oyster mushroom).